The following is a 217-amino-acid chain: 3-isopropylmalate dehydratase small subunit (217 aa).

Belongs to the LeuD family. LeuD type 1 subfamily. In terms of assembly, heterodimer of LeuC and LeuD.

It carries out the reaction (2R,3S)-3-isopropylmalate = (2S)-2-isopropylmalate. Its pathway is amino-acid biosynthesis; L-leucine biosynthesis; L-leucine from 3-methyl-2-oxobutanoate: step 2/4. Catalyzes the isomerization between 2-isopropylmalate and 3-isopropylmalate, via the formation of 2-isopropylmaleate. The sequence is that of 3-isopropylmalate dehydratase small subunit from Delftia acidovorans (strain DSM 14801 / SPH-1).